We begin with the raw amino-acid sequence, 796 residues long: RNA cytosine-C(5)-methyltransferase NSUN2 (796 aa).

Residues 1–11 show a composition bias toward basic residues; that stretch reads MGRRARDRRRQ. The interval 1–36 is disordered; the sequence is MGRRARDRRRQLQPQQRRERSGGGGGGGDDQAGWAG. The span at 22–36 shows a compositional bias: gly residues; the sequence is GGGGGGGDDQAGWAG. S-adenosyl-L-methionine contacts are provided by residues 184 to 190, Asp215, Asp242, and Asp268; that span reads CAAPGSK. Cys321 functions as the Nucleophile in the catalytic mechanism. Disordered regions lie at residues 435–501 and 707–796; these read WNKR…CGPP and RKEG…NVKD. 3 stretches are compositionally biased toward basic and acidic residues: residues 467 to 483, 708 to 721, and 733 to 746; these read ATEK…KKVQ, KEGE…EEVQ, and VEDK…KMEA. Residues 774–783 are compositionally biased toward polar residues; it reads CSKNTNSHIN. A compositionally biased stretch (basic and acidic residues) spans 784–796; it reads QESKDMNTNNVKD.

The protein belongs to the class I-like SAM-binding methyltransferase superfamily. RsmB/NOP family. TRM4 subfamily.

It localises to the nucleus. The protein localises to the nucleolus. The protein resides in the cytoplasm. Its subcellular location is the mitochondrion. It is found in the cytoskeleton. It localises to the spindle. The protein localises to the secreted. The protein resides in the extracellular exosome. The catalysed reaction is cytidine(48) in tRNA + S-adenosyl-L-methionine = 5-methylcytidine(48) in tRNA + S-adenosyl-L-homocysteine + H(+). It carries out the reaction cytidine(49) in tRNA + S-adenosyl-L-methionine = 5-methylcytidine(49) in tRNA + S-adenosyl-L-homocysteine + H(+). The enzyme catalyses cytidine(50) in tRNA + S-adenosyl-L-methionine = 5-methylcytidine(50) in tRNA + S-adenosyl-L-homocysteine + H(+). It catalyses the reaction cytidine(34) in tRNA precursor + S-adenosyl-L-methionine = 5-methylcytidine(34) in tRNA precursor + S-adenosyl-L-homocysteine + H(+). The catalysed reaction is a cytidine in mRNA + S-adenosyl-L-methionine = a 5-methylcytidine in mRNA + S-adenosyl-L-homocysteine + H(+). In terms of biological role, RNA cytosine C(5)-methyltransferase that methylates cytosine to 5-methylcytosine (m5C) in various RNAs, such as tRNAs, mRNAs and some long non-coding RNAs (lncRNAs). Involved in various processes, such as epidermal stem cell differentiation, testis differentiation and maternal to zygotic transition during early development: acts by increasing protein synthesis; cytosine C(5)-methylation promoting tRNA stability and preventing mRNA decay. Methylates cytosine to 5-methylcytosine (m5C) at positions 34 and 48 of intron-containing tRNA(Leu)(CAA) precursors, and at positions 48, 49 and 50 of tRNA(Gly)(GCC) precursors. tRNA methylation is required generation of RNA fragments derived from tRNAs (tRFs). Also mediates C(5)-methylation of mitochondrial tRNAs. Catalyzes cytosine C(5)-methylation of mRNAs, leading to stabilize them and prevent mRNA decay. Cytosine C(5)-methylation of mRNAs also regulates mRNA export. Also mediates cytosine C(5)-methylation of non-coding RNAs, such as vault RNAs (vtRNAs), promoting their processing into regulatory small RNAs. Required for proper spindle assembly and chromosome segregation, independently of its methyltransferase activity. In Gallus gallus (Chicken), this protein is RNA cytosine-C(5)-methyltransferase NSUN2.